Consider the following 319-residue polypeptide: MALTRVAAIDCGTNSIRLLIADVGAGLARGELHDVHRETRIVRLGQGVDATGRFAPEAIARTRTALTDYAELLTFHHAERVRMVATSAARDVVNRDVFFAMTADVLGAALPGSAAEVITGAEEAELSFRGAVGELGSAGAPFVVVDLGGGSTEIVLGEHEVVASYSADIGCVRLTERCLHSDPPTLQEVSTARRLVRERLEPALRTVPLELARTWVGLAGTMTTLSALAQSMTAYDAAAIHLSRVPGADLLEVCQRLIGMTRKQRAALAPMHPGRADVIGGGAIVVEELARELRERAGIDQLTVSEHDILDGIALSLAG.

This sequence belongs to the GppA/Ppx family. As to quaternary structure, homodimer.

The catalysed reaction is [phosphate](n) + H2O = [phosphate](n-1) + phosphate + H(+). Its activity is regulated as follows. Exopolyphosphatase activity is inhibited by ppGpp alarmones produced during the bacterial stringent response. Its function is as follows. Degradation of inorganic polyphosphates (polyP). Releases orthophosphate processively from the ends of the polyP chain. Prefers long-chain length polyphosphates as substrates. This is Exopolyphosphatase 2 from Mycobacterium tuberculosis (strain CDC 1551 / Oshkosh).